Reading from the N-terminus, the 247-residue chain is 5-oxoprolinase subunit A (247 aa).

It belongs to the LamB/PxpA family. As to quaternary structure, forms a complex composed of PxpA, PxpB and PxpC.

It carries out the reaction 5-oxo-L-proline + ATP + 2 H2O = L-glutamate + ADP + phosphate + H(+). In terms of biological role, catalyzes the cleavage of 5-oxoproline to form L-glutamate coupled to the hydrolysis of ATP to ADP and inorganic phosphate. The chain is 5-oxoprolinase subunit A from Klebsiella pneumoniae subsp. pneumoniae (strain ATCC 700721 / MGH 78578).